A 295-amino-acid chain; its full sequence is uncharacterized protein (295 aa).

The first 19 residues, 1–19, serve as a signal peptide directing secretion; the sequence is MFKKYIFILILFIASIARA. The segment at 275–295 is disordered; sequence RNNPPLKNNNAKGKNPYDTNK. The segment covering 276-295 has biased composition (low complexity); it reads NNPPLKNNNAKGKNPYDTNK.

This is an uncharacterized protein from Rickettsia conorii (strain ATCC VR-613 / Malish 7).